We begin with the raw amino-acid sequence, 428 residues long: Enolase (428 aa).

Position 164 (glutamine 164) interacts with (2R)-2-phosphoglycerate. Glutamate 208 acts as the Proton donor in catalysis. Mg(2+) is bound by residues aspartate 245, glutamate 286, and aspartate 313. Lysine 338, arginine 367, serine 368, and lysine 389 together coordinate (2R)-2-phosphoglycerate. Residue lysine 338 is the Proton acceptor of the active site.

This sequence belongs to the enolase family. It depends on Mg(2+) as a cofactor.

The protein resides in the cytoplasm. It is found in the secreted. It localises to the cell surface. The catalysed reaction is (2R)-2-phosphoglycerate = phosphoenolpyruvate + H2O. Its pathway is carbohydrate degradation; glycolysis; pyruvate from D-glyceraldehyde 3-phosphate: step 4/5. Functionally, catalyzes the reversible conversion of 2-phosphoglycerate (2-PG) into phosphoenolpyruvate (PEP). It is essential for the degradation of carbohydrates via glycolysis. This Pyrococcus horikoshii (strain ATCC 700860 / DSM 12428 / JCM 9974 / NBRC 100139 / OT-3) protein is Enolase.